Here is a 378-residue protein sequence, read N- to C-terminus: tRNA-specific 2-thiouridylase MnmA (378 aa).

ATP is bound by residues 9–16 (GVSGGVDS) and Met-35. Residues 94-96 (NPD) form an interaction with target base in tRNA region. The active-site Nucleophile is Cys-99. Cys-99 and Cys-195 are oxidised to a cystine. Gly-123 provides a ligand contact to ATP. Residues 145–147 (KDQ) form an interaction with tRNA region. Cys-195 acts as the Cysteine persulfide intermediate in catalysis. The interval 307-308 (RY) is interaction with tRNA.

Belongs to the MnmA/TRMU family.

It is found in the cytoplasm. It catalyses the reaction S-sulfanyl-L-cysteinyl-[protein] + uridine(34) in tRNA + AH2 + ATP = 2-thiouridine(34) in tRNA + L-cysteinyl-[protein] + A + AMP + diphosphate + H(+). Catalyzes the 2-thiolation of uridine at the wobble position (U34) of tRNA, leading to the formation of s(2)U34. The chain is tRNA-specific 2-thiouridylase MnmA from Xanthomonas axonopodis pv. citri (strain 306).